Here is a 22-residue protein sequence, read N- to C-terminus: MRNISLTTTIITTTDTTGNGAG.

Positions 1–22 (MRNISLTTTIITTTDTTGNGAG) are disordered. Residues 7–22 (TTTIITTTDTTGNGAG) are compositionally biased toward low complexity.

Belongs to the thr operon leader peptide family.

Its function is as follows. This protein is involved in control of the biosynthesis of threonine. The polypeptide is thr operon leader peptide (Serratia marcescens).